We begin with the raw amino-acid sequence, 556 residues long: Formate--tetrahydrofolate ligase (556 aa).

Residue 65–72 (TPAGEGKS) participates in ATP binding.

This sequence belongs to the formate--tetrahydrofolate ligase family.

It carries out the reaction (6S)-5,6,7,8-tetrahydrofolate + formate + ATP = (6R)-10-formyltetrahydrofolate + ADP + phosphate. It functions in the pathway one-carbon metabolism; tetrahydrofolate interconversion. In Streptococcus pneumoniae (strain Hungary19A-6), this protein is Formate--tetrahydrofolate ligase.